Here is a 196-residue protein sequence, read N- to C-terminus: Adenylate kinase (196 aa).

9–17 lines the ATP pocket; sequence GIPGVGKST.

This sequence belongs to the archaeal adenylate kinase family.

The protein localises to the cytoplasm. It catalyses the reaction AMP + ATP = 2 ADP. This is Adenylate kinase from Thermococcus onnurineus (strain NA1).